A 294-amino-acid chain; its full sequence is Ribosomal RNA small subunit methyltransferase H (294 aa).

S-adenosyl-L-methionine contacts are provided by residues Gly-31–Tyr-33, Asp-49, Phe-76, Asp-97, and Gln-104.

This sequence belongs to the methyltransferase superfamily. RsmH family.

The protein localises to the cytoplasm. The catalysed reaction is cytidine(1402) in 16S rRNA + S-adenosyl-L-methionine = N(4)-methylcytidine(1402) in 16S rRNA + S-adenosyl-L-homocysteine + H(+). Functionally, specifically methylates the N4 position of cytidine in position 1402 (C1402) of 16S rRNA. This Wolbachia pipientis subsp. Culex pipiens (strain wPip) protein is Ribosomal RNA small subunit methyltransferase H.